The following is a 157-amino-acid chain: Peptide methionine sulfoxide reductase MsrA (157 aa).

Cys13 is a catalytic residue.

This sequence belongs to the MsrA Met sulfoxide reductase family.

The enzyme catalyses L-methionyl-[protein] + [thioredoxin]-disulfide + H2O = L-methionyl-(S)-S-oxide-[protein] + [thioredoxin]-dithiol. The catalysed reaction is [thioredoxin]-disulfide + L-methionine + H2O = L-methionine (S)-S-oxide + [thioredoxin]-dithiol. Functionally, has an important function as a repair enzyme for proteins that have been inactivated by oxidation. Catalyzes the reversible oxidation-reduction of methionine sulfoxide in proteins to methionine. The chain is Peptide methionine sulfoxide reductase MsrA from Methanococcus maripaludis (strain C5 / ATCC BAA-1333).